The sequence spans 374 residues: DNA integrity scanning protein DisA (374 aa).

A DAC domain is found at 20 to 158; it reads DGLMRASLSA…DGMRRVLEDS (139 aa). ATP is bound by residues Gly-87, Leu-105, and 118-122; that span reads TRHRT.

This sequence belongs to the DisA family. Homooctamer. Requires Mg(2+) as cofactor.

It carries out the reaction 2 ATP = 3',3'-c-di-AMP + 2 diphosphate. Its function is as follows. Participates in a DNA-damage check-point that is active prior to asymmetric division when DNA is damaged. DisA forms globular foci that rapidly scan along the chromosomes during sporulation, searching for lesions. When a lesion is present, DisA pauses at the lesion site. This triggers a cellular response that culminates in a temporary block in sporulation initiation. In terms of biological role, also has diadenylate cyclase activity, catalyzing the condensation of 2 ATP molecules into cyclic di-AMP (c-di-AMP). c-di-AMP acts as a signaling molecule that couples DNA integrity with progression of sporulation. The rise in c-di-AMP level generated by DisA while scanning the chromosome, operates as a positive signal that advances sporulation; upon encountering a lesion, the DisA focus arrests at the damaged site and halts c-di-AMP synthesis. This chain is DNA integrity scanning protein DisA, found in Streptomyces avermitilis (strain ATCC 31267 / DSM 46492 / JCM 5070 / NBRC 14893 / NCIMB 12804 / NRRL 8165 / MA-4680).